The sequence spans 576 residues: Proline--tRNA ligase (576 aa).

The protein belongs to the class-II aminoacyl-tRNA synthetase family. ProS type 1 subfamily. As to quaternary structure, homodimer.

It is found in the cytoplasm. It carries out the reaction tRNA(Pro) + L-proline + ATP = L-prolyl-tRNA(Pro) + AMP + diphosphate. In terms of biological role, catalyzes the attachment of proline to tRNA(Pro) in a two-step reaction: proline is first activated by ATP to form Pro-AMP and then transferred to the acceptor end of tRNA(Pro). As ProRS can inadvertently accommodate and process non-cognate amino acids such as alanine and cysteine, to avoid such errors it has two additional distinct editing activities against alanine. One activity is designated as 'pretransfer' editing and involves the tRNA(Pro)-independent hydrolysis of activated Ala-AMP. The other activity is designated 'posttransfer' editing and involves deacylation of mischarged Ala-tRNA(Pro). The misacylated Cys-tRNA(Pro) is not edited by ProRS. In Thiobacillus denitrificans (strain ATCC 25259 / T1), this protein is Proline--tRNA ligase.